We begin with the raw amino-acid sequence, 345 residues long: DNA-directed RNA polymerase subunit alpha (345 aa).

Residues 1-241 (MLRDTHLALQ…DQLGMFINFE (241 aa)) form an alpha N-terminal domain (alpha-NTD) region. Residues 257–345 (FNPNLLRKVD…ELVKRSDNPF (89 aa)) form an alpha C-terminal domain (alpha-CTD) region.

The protein belongs to the RNA polymerase alpha chain family. Homodimer. The RNAP catalytic core consists of 2 alpha, 1 beta, 1 beta' and 1 omega subunit. When a sigma factor is associated with the core the holoenzyme is formed, which can initiate transcription.

The enzyme catalyses RNA(n) + a ribonucleoside 5'-triphosphate = RNA(n+1) + diphosphate. DNA-dependent RNA polymerase catalyzes the transcription of DNA into RNA using the four ribonucleoside triphosphates as substrates. The chain is DNA-directed RNA polymerase subunit alpha from Acidiphilium cryptum (strain JF-5).